The primary structure comprises 340 residues: Phosphoribosylformylglycinamidine cyclo-ligase (340 aa).

Belongs to the AIR synthase family.

Its subcellular location is the cytoplasm. It catalyses the reaction 2-formamido-N(1)-(5-O-phospho-beta-D-ribosyl)acetamidine + ATP = 5-amino-1-(5-phospho-beta-D-ribosyl)imidazole + ADP + phosphate + H(+). It functions in the pathway purine metabolism; IMP biosynthesis via de novo pathway; 5-amino-1-(5-phospho-D-ribosyl)imidazole from N(2)-formyl-N(1)-(5-phospho-D-ribosyl)glycinamide: step 2/2. The protein is Phosphoribosylformylglycinamidine cyclo-ligase of Streptococcus pneumoniae (strain 70585).